The primary structure comprises 652 residues: Acetyl-coenzyme A synthetase (652 aa).

CoA-binding positions include 189–192 (RGDK) and Thr311. Residues 387–389 (GEP), 411–416 (DTWWQT), Asp500, and Arg515 contribute to the ATP site. Ser523 contributes to the CoA binding site. Arg526 serves as a coordination point for ATP. Mg(2+)-binding residues include His539 and Val542. Arg584 lines the CoA pocket. Residue Lys609 is modified to N6-acetyllysine.

Belongs to the ATP-dependent AMP-binding enzyme family. It depends on Mg(2+) as a cofactor. Acetylated. Deacetylation by the SIR2-homolog deacetylase activates the enzyme.

The catalysed reaction is acetate + ATP + CoA = acetyl-CoA + AMP + diphosphate. In terms of biological role, catalyzes the conversion of acetate into acetyl-CoA (AcCoA), an essential intermediate at the junction of anabolic and catabolic pathways. AcsA undergoes a two-step reaction. In the first half reaction, AcsA combines acetate with ATP to form acetyl-adenylate (AcAMP) intermediate. In the second half reaction, it can then transfer the acetyl group from AcAMP to the sulfhydryl group of CoA, forming the product AcCoA. The polypeptide is Acetyl-coenzyme A synthetase (Bartonella bacilliformis (strain ATCC 35685 / KC583 / Herrer 020/F12,63)).